Consider the following 363-residue polypeptide: Lipoyl synthase (363 aa).

The [4Fe-4S] cluster site is built by Cys-55, Cys-60, Cys-66, Cys-81, Cys-85, Cys-88, and Ser-292. The region spanning 67-281 is the Radical SAM core domain; that stretch reads WESREATFLI…SKLAKELGFG (215 aa). Positions 338 to 363 are disordered; that stretch reads PSEETPVTTRMAKTPAQSNSVAATIR. Residues 352–363 show a composition bias toward polar residues; that stretch reads PAQSNSVAATIR.

This sequence belongs to the radical SAM superfamily. Lipoyl synthase family. Requires [4Fe-4S] cluster as cofactor.

It localises to the cytoplasm. The enzyme catalyses [[Fe-S] cluster scaffold protein carrying a second [4Fe-4S](2+) cluster] + N(6)-octanoyl-L-lysyl-[protein] + 2 oxidized [2Fe-2S]-[ferredoxin] + 2 S-adenosyl-L-methionine + 4 H(+) = [[Fe-S] cluster scaffold protein] + N(6)-[(R)-dihydrolipoyl]-L-lysyl-[protein] + 4 Fe(3+) + 2 hydrogen sulfide + 2 5'-deoxyadenosine + 2 L-methionine + 2 reduced [2Fe-2S]-[ferredoxin]. It functions in the pathway protein modification; protein lipoylation via endogenous pathway; protein N(6)-(lipoyl)lysine from octanoyl-[acyl-carrier-protein]: step 2/2. Catalyzes the radical-mediated insertion of two sulfur atoms into the C-6 and C-8 positions of the octanoyl moiety bound to the lipoyl domains of lipoate-dependent enzymes, thereby converting the octanoylated domains into lipoylated derivatives. The chain is Lipoyl synthase from Corynebacterium aurimucosum (strain ATCC 700975 / DSM 44827 / CIP 107346 / CN-1) (Corynebacterium nigricans).